The primary structure comprises 277 residues: Elongation factor Ts (277 aa).

Residues 79-82 are involved in Mg(2+) ion dislocation from EF-Tu; that stretch reads TDFV.

Belongs to the EF-Ts family.

It localises to the cytoplasm. Associates with the EF-Tu.GDP complex and induces the exchange of GDP to GTP. It remains bound to the aminoacyl-tRNA.EF-Tu.GTP complex up to the GTP hydrolysis stage on the ribosome. This Phytoplasma australiense protein is Elongation factor Ts.